The sequence spans 97 residues: Co-chaperonin GroES (97 aa).

This sequence belongs to the GroES chaperonin family. As to quaternary structure, heptamer of 7 subunits arranged in a ring. Interacts with the chaperonin GroEL.

The protein localises to the cytoplasm. Functionally, together with the chaperonin GroEL, plays an essential role in assisting protein folding. The GroEL-GroES system forms a nano-cage that allows encapsulation of the non-native substrate proteins and provides a physical environment optimized to promote and accelerate protein folding. GroES binds to the apical surface of the GroEL ring, thereby capping the opening of the GroEL channel. The chain is Co-chaperonin GroES from Buchnera aphidicola subsp. Pemphigus spyrothecae.